A 516-amino-acid chain; its full sequence is Propionyl-CoA carboxylase, carboxyltransferase subunit (516 aa).

A disordered region spans residues 1–32 (MTMEDRIDELREKREEALKGGGEDRIASQHDK). A CoA carboxyltransferase N-terminal domain is found at 3-259 (MEDRIDELRE…NNVEDPPRVE (257 aa)). In terms of domain architecture, CoA carboxyltransferase C-terminal spans 263-509 (DPERVADELE…KSKRKSQPDK (247 aa)).

It belongs to the AccD/PCCB family. The propionyl coenzyme A carboxylase (PCC) complex is composed of three subunits: PccA (biotin carboxylase and biotin-carboxyl carrier), PccB (carboxyltransferase) and PccX.

The catalysed reaction is propanoyl-CoA + hydrogencarbonate + ATP = (S)-methylmalonyl-CoA + ADP + phosphate + H(+). It functions in the pathway metabolic intermediate metabolism; propanoyl-CoA degradation; succinyl-CoA from propanoyl-CoA: step 1/3. Its function is as follows. Part of the propionyl coenzyme A carboxylase (PCC) complex involved in propionate utilization and in the production of the poly(3-hydroxybutyrate-co-3-hydroxyvalerate)(PHBV), which is a water-insoluble biopolymer used as intracellular energy reserve material when cells grow under conditions of nutrient limitation. The complex catalyzes the carboxylation of propionyl-CoA to methylmalonyl-CoA. PCC is also able to catalyze the carboxylation of acetyl-CoA. This is Propionyl-CoA carboxylase, carboxyltransferase subunit from Haloferax mediterranei (strain ATCC 33500 / DSM 1411 / JCM 8866 / NBRC 14739 / NCIMB 2177 / R-4) (Halobacterium mediterranei).